The primary structure comprises 226 residues: UPF0173 metal-dependent hydrolase Dgeo_0136 (226 aa).

The protein belongs to the UPF0173 family.

The protein is UPF0173 metal-dependent hydrolase Dgeo_0136 of Deinococcus geothermalis (strain DSM 11300 / CIP 105573 / AG-3a).